Here is an 862-residue protein sequence, read N- to C-terminus: Autotaxin (862 aa).

The N-terminal stretch at 1 to 27 (MARQGCFGSYQVISLFTFAIGVNLCLG) is a signal peptide. Positions 28-35 (FTASRIKR) are cleaved as a propeptide — removed by furin. Asparagine 53 carries N-linked (GlcNAc...) asparagine glycosylation. SMB domains lie at 54 to 97 (TSGS…LKTA) and 98 to 142 (RGWE…GESH). 10 disulfide bridges follow: cysteine 58–cysteine 75, cysteine 62–cysteine 93, cysteine 73–cysteine 86, cysteine 79–cysteine 85, cysteine 102–cysteine 119, cysteine 107–cysteine 137, cysteine 117–cysteine 130, cysteine 123–cysteine 129, cysteine 148–cysteine 194, and cysteine 156–cysteine 350. The short motif at 126-128 (RGD) is the Cell attachment site element. Positions 144-501 (VDDDCEEIRV…PTFKYRTKVP (358 aa)) are phosphodiesterase domain. Zn(2+)-binding residues include aspartate 171 and threonine 209. Threonine 209 functions as the Nucleophile in the catalytic mechanism. Positions 209, 230, and 311 each coordinate 1-(9Z-octadecenoyl)-sn-glycero-3-phosphate. Residues threonine 209, asparagine 230, and aspartate 311 each contribute to the 1-hexadecanoyl-sn-glycero-3-phosphate site. Positions 209, 230, and 311 each coordinate 1-tetradecanoyl-sn-glycerol 3-phosphate. Aspartate 311, histidine 315, aspartate 358, and histidine 359 together coordinate Zn(2+). Disulfide bonds link cysteine 366-cysteine 468, cysteine 413-cysteine 805, cysteine 566-cysteine 666, cysteine 568-cysteine 651, and cysteine 774-cysteine 784. Residue asparagine 410 is glycosylated (N-linked (GlcNAc...) asparagine). Histidine 474 serves as a coordination point for Zn(2+). Histidine 474 serves as a coordination point for 1-(9Z-octadecenoyl)-sn-glycero-3-phosphate. Histidine 474 provides a ligand contact to 1-hexadecanoyl-sn-glycero-3-phosphate. Histidine 474 lines the 1-tetradecanoyl-sn-glycerol 3-phosphate pocket. Asparagine 524 carries an N-linked (GlcNAc...) asparagine glycan. The tract at residues 597-862 (LYGRPAVLYR…TYLHTYESEI (266 aa)) is nuclease-like domain. Ca(2+)-binding residues include aspartate 739, asparagine 741, asparagine 743, leucine 745, and aspartate 747. N-linked (GlcNAc...) asparagine glycosylation occurs at asparagine 806. The tract at residues 829–850 (IEHLTGLDFYRKTSRSYSEILT) is required for secretion.

The protein belongs to the nucleotide pyrophosphatase/phosphodiesterase family. Zn(2+) is required as a cofactor. Requires Ca(2+) as cofactor. N-glycosylation, but not furin-cleavage, plays a critical role on secretion and on lysoPLD activity. Secretion requires simultaneous glycosylation on Asn-53 and Asn-410, while probable glycosylation of Asn-410 has a preferential role on lysoPLD activity. Not O-glycosylated. Post-translationally, the interdomain disulfide bond between Cys-413 and Cys-805 is essential for catalytic activity. As to expression, expressed in brain and adipose tissue.

The protein resides in the secreted. It carries out the reaction a 1-O-alkyl-sn-glycero-3-phosphoethanolamine + H2O = a 1-O-alkyl-sn-glycero-3-phosphate + ethanolamine + H(+). The catalysed reaction is a 1-acyl-sn-glycero-3-phosphoethanolamine + H2O = a 1-acyl-sn-glycero-3-phosphate + ethanolamine + H(+). The enzyme catalyses 1-(9Z-octadecenoyl)-sn-glycero-3-phosphoethanolamine + H2O = 1-(9Z-octadecenoyl)-sn-glycero-3-phosphate + ethanolamine + H(+). It catalyses the reaction a 1-O-alkyl-sn-glycero-3-phosphocholine + H2O = a 1-O-alkyl-sn-glycero-3-phosphate + choline + H(+). It carries out the reaction 1-O-(9Z-octadecenyl)-sn-glycero-3-phosphocholine + H2O = 1-O-(9Z-octadecenyl)-sn-glycero-3-phosphate + choline + H(+). The catalysed reaction is 1-O-hexadecyl-sn-glycero-3-phosphocholine + H2O = 1-O-hexadecyl-sn-glycero-3-phosphate + choline + H(+). The enzyme catalyses a 1-O-(1Z-alkenyl)-sn-glycero-3-phosphocholine + H2O = a 1-O-(1Z-alkenyl)-sn-glycero-3-phosphate + choline + H(+). It catalyses the reaction a 1-acyl-sn-glycero-3-phosphocholine + H2O = a 1-acyl-sn-glycero-3-phosphate + choline + H(+). It carries out the reaction 1-dodecanoyl-sn-glycero-3-phosphocholine + H2O = 1-dodecanoyl-sn-glycerol 3-phosphate + choline + H(+). The catalysed reaction is 1-(9Z-octadecenoyl)-sn-glycero-3-phosphocholine + H2O = 1-(9Z-octadecenoyl)-sn-glycero-3-phosphate + choline + H(+). The enzyme catalyses 1-tetradecanoyl-sn-glycero-3-phosphocholine + H2O = 1-tetradecanoyl-sn-glycerol 3-phosphate + choline + H(+). It catalyses the reaction 1-decanoyl-sn-glycero-3-phosphocholine + H2O = 1-decanoyl-sn-glycero-3-phosphate + choline + H(+). It carries out the reaction 1-octadecanoyl-sn-glycero-3-phosphocholine + H2O = 1-octadecanoyl-sn-glycero-3-phosphate + choline + H(+). The catalysed reaction is 1-hexadecanoyl-sn-glycero-3-phosphocholine + H2O = 1-hexadecanoyl-sn-glycero-3-phosphate + choline + H(+). The enzyme catalyses 1-hexanoyl-sn-glycero-3-phosphocholine + H2O = 1-hexanoyl-sn-glycero-3-phosphate + choline + H(+). It catalyses the reaction 1-(9Z,12Z)-octadecadienoyl-sn-glycero-3-phosphocholine + H2O = 1-(9Z,12Z)-octadecadienoyl-sn-glycero-3-phosphate + choline + H(+). It carries out the reaction sphing-4-enine-phosphocholine + H2O = sphing-4-enine 1-phosphate + choline + H(+). The catalysed reaction is 1-(5Z,8Z,11Z,14Z-eicosatetraenoyl)-sn-glycero-3-phosphocholine + H2O = 1-(5Z,8Z,11Z,14Z-eicosatetraenoyl)-sn-glycero-3-phosphate + choline + H(+). The enzyme catalyses a 2-acyl-sn-glycero-3-phosphocholine + H2O = a 2-acyl-sn-glycerol 3-phosphate + choline + H(+). It catalyses the reaction a 1,2-diacyl-sn-glycero-3-phosphocholine + H2O = a 1,2-diacyl-sn-glycero-3-phosphate + choline + H(+). It carries out the reaction 1,2-dioctanoyl-sn-glycero-3-phosphocholine + H2O = 1,2-dioctanoyl-sn-glycero-3-phosphate + choline + H(+). The catalysed reaction is 1,2-didecanoyl-sn-glycero-3-phosphocholine + H2O = 1,2-didecanoyl-sn-glycero-3-phosphate + choline + H(+). The enzyme catalyses a 1-acyl-sn-glycero-3-phospho-L-serine + H2O = a 1-acyl-sn-glycero-3-phosphate + L-serine + H(+). It catalyses the reaction 1-(9Z-octadecenoyl)-sn-glycero-3-phospho-L-serine + H2O = 1-(9Z-octadecenoyl)-sn-glycero-3-phosphate + L-serine + H(+). It carries out the reaction a 2-acyl-sn-glycero-3-phospho-L-serine + H2O = a 2-acyl-sn-glycerol 3-phosphate + L-serine + H(+). Its activity is regulated as follows. Inhibited by EDTA and EGTA. In terms of biological role, secreted lysophospholipase D that hydrolyzes lysophospholipids to produce the signaling molecule lysophosphatidic acid (LPA) in extracellular fluids. Its major substrate is lysophosphatidylcholine. Can also act on sphingosylphosphorylcholine producing sphingosine-1-phosphate, a modulator of cell motility. Can hydrolyze, in vitro, bis-pNPP, to some extent pNP-TMP, and barely ATP. Involved in several motility-related processes such as angiogenesis and neurite outgrowth. Acts as an angiogenic factor by stimulating migration of smooth muscle cells and microtubule formation. Stimulates migration of melanoma cells, probably via a pertussis toxin-sensitive G protein. May have a role in induction of parturition. Possible involvement in cell proliferation and adipose tissue development. Required for LPA production in activated platelets, cleaves the sn-1 lysophospholipids to generate sn-1 lysophosphatidic acids containing predominantly 18:2 and 20:4 fatty acids. Shows a preference for the sn-1 to the sn-2 isomer of 1-O-alkyl-sn-glycero-3-phosphocholine (lyso-PAF). The chain is Autotaxin from Mus musculus (Mouse).